The sequence spans 92 residues: uncharacterized protein (92 aa).

Positions 25-53 are disordered; that stretch reads AGRGVRREARDTPCRGTAEGLATSQPEDG.

This is an uncharacterized protein from Treponema pallidum (strain Nichols).